A 263-amino-acid polypeptide reads, in one-letter code: Hydroxyacylglutathione hydrolase (263 aa).

Zn(2+)-binding residues include His56, His58, Asp60, His61, His115, Asp135, and His175.

It belongs to the metallo-beta-lactamase superfamily. Glyoxalase II family. Monomer. Zn(2+) serves as cofactor.

The enzyme catalyses an S-(2-hydroxyacyl)glutathione + H2O = a 2-hydroxy carboxylate + glutathione + H(+). Its pathway is secondary metabolite metabolism; methylglyoxal degradation; (R)-lactate from methylglyoxal: step 2/2. In terms of biological role, thiolesterase that catalyzes the hydrolysis of S-D-lactoyl-glutathione to form glutathione and D-lactic acid. The chain is Hydroxyacylglutathione hydrolase from Nitrosococcus oceani (strain ATCC 19707 / BCRC 17464 / JCM 30415 / NCIMB 11848 / C-107).